The following is an 866-amino-acid chain: Protein translocase subunit SecA (866 aa).

Residues Gln87, 105 to 109, and Asp514 contribute to the ATP site; that span reads GEGKT. Residues 819–858 are disordered; it reads VSPIGTPSSEGGGETSGADTYSNKKIGRNDPCPCGSGKKY. Zn(2+) contacts are provided by Cys850, Cys852, Cys861, and Cys862.

Belongs to the SecA family. Monomer and homodimer. Part of the essential Sec protein translocation apparatus which comprises SecA, SecYEG and auxiliary proteins SecDF. Other proteins may also be involved. It depends on Zn(2+) as a cofactor.

The protein resides in the cell inner membrane. The protein localises to the cytoplasm. It carries out the reaction ATP + H2O + cellular proteinSide 1 = ADP + phosphate + cellular proteinSide 2.. Functionally, part of the Sec protein translocase complex. Interacts with the SecYEG preprotein conducting channel. Has a central role in coupling the hydrolysis of ATP to the transfer of proteins into and across the cell membrane, serving as an ATP-driven molecular motor driving the stepwise translocation of polypeptide chains across the membrane. The polypeptide is Protein translocase subunit SecA (Elusimicrobium minutum (strain Pei191)).